A 266-amino-acid chain; its full sequence is Glucosamine-6-phosphate deaminase (266 aa).

The active-site Proton acceptor; for enolization step is Asp72. Asp141 (for ring-opening step) is an active-site residue. The active-site Proton acceptor; for ring-opening step is His143. The For ring-opening step role is filled by Glu148.

The protein belongs to the glucosamine/galactosamine-6-phosphate isomerase family. NagB subfamily. As to quaternary structure, homohexamer.

The enzyme catalyses alpha-D-glucosamine 6-phosphate + H2O = beta-D-fructose 6-phosphate + NH4(+). It participates in amino-sugar metabolism; N-acetylneuraminate degradation; D-fructose 6-phosphate from N-acetylneuraminate: step 5/5. Allosterically activated by N-acetylglucosamine 6-phosphate (GlcNAc6P). Its function is as follows. Catalyzes the reversible isomerization-deamination of glucosamine 6-phosphate (GlcN6P) to form fructose 6-phosphate (Fru6P) and ammonium ion. The sequence is that of Glucosamine-6-phosphate deaminase from Vibrio vulnificus (strain CMCP6).